The primary structure comprises 337 residues: Major envelope glycoprotein (337 aa).

Residues Asn-76, Asn-114, Asn-271, and Asn-301 are each glycosylated (N-linked (GlcNAc...) asparagine; by host).

The protein belongs to the baculoviridae gp64 family. Post-translationally, palmitoylated.

It is found in the virion membrane. The protein resides in the host cell membrane. Functionally, envelope phosphoglycoprotein which mediates the fusion of viral and host endosomal membranes leading to virus entry into the host cell. This is Major envelope glycoprotein (GP67) from Lepidoptera (butterflies and moths).